We begin with the raw amino-acid sequence, 269 residues long: METWRFIDHCSFSGAENMAIDEALLQEAINNHGAPVLRFYTWTRPTLSLGYFQKAQEEVDFSECEKLGVEVVRRPTGGRAVLHEFELTYSIVGSIQHPKLSGTVLESYLKISKGLLLGLKNLGIEGEIAEGKKTSDLSAICFEAPSWYELTVMGRKVIGSAQVRRGDYLLQHGAIVIKMDVDKLFRVLKFKSLEQKERIRASFHRKAGAIHDFSSREFSLAEIKEAFLAGFSEGFEVNFIRSELSLKERELSRQLLREKYNTREWLFRF.

The 209-residue stretch at 31–239 folds into the BPL/LPL catalytic domain; it reads NHGAPVLRFY…GFSEGFEVNF (209 aa). Catalysis depends on Cys-141, which acts as the Acyl-thioester intermediate.

It belongs to the octanoyltransferase LipM family. As to quaternary structure, monomer.

The catalysed reaction is octanoyl-[ACP] + L-lysyl-[protein] = N(6)-octanoyl-L-lysyl-[protein] + holo-[ACP] + H(+). It functions in the pathway protein modification; protein lipoylation via endogenous pathway; protein N(6)-(lipoyl)lysine from octanoyl-[acyl-carrier-protein]. Catalyzes the transfer of endogenously produced octanoic acid from octanoyl-acyl-carrier-protein onto the lipoyl domain of GcvH, an intermediate carrier during protein lipoylation. This Carboxydothermus hydrogenoformans (strain ATCC BAA-161 / DSM 6008 / Z-2901) protein is Octanoyltransferase LipM.